A 336-amino-acid polypeptide reads, in one-letter code: SCP domain-containing protein 1 (336 aa).

The N-terminal stretch at 1-18 (MEFKLLLVLCFNIGLICS) is a signal peptide. Asn-47 is a glycosylation site (N-linked (GlcNAc...) asparagine). A compositionally biased stretch (polar residues) spans 73-85 (QGGNTAPSSSLPG). The tract at residues 73–94 (QGGNTAPSSSLPGVSSMPMPSA) is disordered. The region spanning 175 to 292 (LEEHNKFRSD…YCGDMSFIAC (118 aa)) is the SCP domain. Residues Asn-213 and Asn-257 are each glycosylated (N-linked (GlcNAc...) asparagine).

In terms of tissue distribution, component of the acid-insoluble and acid-soluble organic matrix of calcified layers of the shell (at protein level).

Its subcellular location is the secreted. This is SCP domain-containing protein 1 from Lottia gigantea (Giant owl limpet).